The chain runs to 390 residues: Large ribosomal subunit protein mL44 (390 aa).

The transit peptide at 1–59 directs the protein to the mitochondrion; that stretch reads MGIVLKRAIAAGMKPFPNSTWHWSRTIRPFSQHLSSTCFLQQSSRFTSKRYLHLSTLTQ. Positions 139-205 constitute an RNase III domain; that stretch reads AFVNTVPTNK…LAHIAKYWGI (67 aa). In terms of domain architecture, DRBM spans 302-372; it reads QPTRELAMLC…ATDALMKWYC (71 aa).

Belongs to the ribonuclease III family. Mitochondrion-specific ribosomal protein mL44 subfamily. Component of the mitochondrial large ribosomal subunit (mt-LSU). Mature yeast 74S mitochondrial ribosomes consist of a small (37S) and a large (54S) subunit. The 37S small subunit contains a 15S ribosomal RNA (15S mt-rRNA) and 34 different proteins. The 54S large subunit contains a 21S rRNA (21S mt-rRNA) and 46 different proteins. mL44 forms a heterodimer with mL57 and stabilizes rRNA expansion segments 1/2 at a membrane-facing protuberance close to the point of attachment of the ribosome to the translocon in the membrane.

Its subcellular location is the mitochondrion. Component of the mitochondrial ribosome (mitoribosome), a dedicated translation machinery responsible for the synthesis of mitochondrial genome-encoded proteins, including at least some of the essential transmembrane subunits of the mitochondrial respiratory chain. The mitoribosomes are attached to the mitochondrial inner membrane and translation products are cotranslationally integrated into the membrane. This is Large ribosomal subunit protein mL44 (MRPL3) from Saccharomyces cerevisiae (strain ATCC 204508 / S288c) (Baker's yeast).